A 308-amino-acid chain; its full sequence is MIIVTGGFGMIGSNIVKALNEIGRKDILVVDNLKNGEKFVNLVDLDIADYCDKEDFIASIIAGDDFGEIDAVFHEGACSATTEWDGKYLMHNNYEYSKELLHFCLDHQIPFFYASSAATYGGRSDNFIEERKFEQPLNAYGYSKFLFDEYVRQVLPEADSPVCGFKYFNVYGPREQHKGSMASVAFHLNNQMLKGENPKLFEGSETFLRDFVYVEDVAKVNIWAWQNSISGIYNLGTGKAESFQAVAQAVIDFHGKGEIEKIPFPDHLKSRYQTFTQADLTKLRAAGYTGTFKTVAEGTKEYMAWLNR.

NADP(+)-binding positions include 10 to 11 (MI), 31 to 32 (DN), K38, K53, 75 to 79 (EGACS), and N92. The active-site Proton acceptor is the Y140. K144 contacts NADP(+). N169 is a substrate binding site. V170 and K178 together coordinate NADP(+). The active-site Proton acceptor is the K178. Residues S180, H187, 201–204 (FEGS), R209, and Y272 each bind substrate.

This sequence belongs to the NAD(P)-dependent epimerase/dehydratase family. HldD subfamily. Homopentamer. NADP(+) serves as cofactor.

The catalysed reaction is ADP-D-glycero-beta-D-manno-heptose = ADP-L-glycero-beta-D-manno-heptose. It functions in the pathway nucleotide-sugar biosynthesis; ADP-L-glycero-beta-D-manno-heptose biosynthesis; ADP-L-glycero-beta-D-manno-heptose from D-glycero-beta-D-manno-heptose 7-phosphate: step 4/4. Its function is as follows. Catalyzes the interconversion between ADP-D-glycero-beta-D-manno-heptose and ADP-L-glycero-beta-D-manno-heptose via an epimerization at carbon 6 of the heptose. The sequence is that of ADP-L-glycero-D-manno-heptose-6-epimerase from Actinobacillus pleuropneumoniae serotype 7 (strain AP76).